Reading from the N-terminus, the 336-residue chain is tRNA N6-adenosine threonylcarbamoyltransferase (336 aa).

Fe cation is bound by residues H114 and H118. Substrate is bound by residues 136–140 (LVSGG), D169, G182, D186, and N275. Fe cation is bound at residue D301.

The protein belongs to the KAE1 / TsaD family. It depends on Fe(2+) as a cofactor.

It localises to the cytoplasm. It carries out the reaction L-threonylcarbamoyladenylate + adenosine(37) in tRNA = N(6)-L-threonylcarbamoyladenosine(37) in tRNA + AMP + H(+). Required for the formation of a threonylcarbamoyl group on adenosine at position 37 (t(6)A37) in tRNAs that read codons beginning with adenine. Is involved in the transfer of the threonylcarbamoyl moiety of threonylcarbamoyl-AMP (TC-AMP) to the N6 group of A37, together with TsaE and TsaB. TsaD likely plays a direct catalytic role in this reaction. The polypeptide is tRNA N6-adenosine threonylcarbamoyltransferase (Streptococcus pneumoniae serotype 19F (strain G54)).